The sequence spans 309 residues: uncharacterized protein (309 aa).

This sequence to S.pombe SpAC14C4.04.

This is an uncharacterized protein from Schizosaccharomyces pombe (strain 972 / ATCC 24843) (Fission yeast).